A 20-amino-acid polypeptide reads, in one-letter code: Putative phosphoglycerate kinase (20 aa).

Belongs to the phosphoglycerate kinase family. In terms of assembly, monomer.

Its subcellular location is the cytoplasm. It carries out the reaction (2R)-3-phosphoglycerate + ATP = (2R)-3-phospho-glyceroyl phosphate + ADP. The protein operates within carbohydrate degradation; glycolysis; pyruvate from D-glyceraldehyde 3-phosphate: step 2/5. This is Putative phosphoglycerate kinase (pgk) from Clostridium pasteurianum.